Here is a 622-residue protein sequence, read N- to C-terminus: 1-deoxy-D-xylulose-5-phosphate synthase (622 aa).

Thiamine diphosphate contacts are provided by residues His80 and 121 to 123 (GHS). Asp152 serves as a coordination point for Mg(2+). Thiamine diphosphate-binding positions include 153 to 154 (GA), Asn181, Tyr288, and Glu370. Asn181 serves as a coordination point for Mg(2+).

It belongs to the transketolase family. DXPS subfamily. In terms of assembly, homodimer. Mg(2+) serves as cofactor. The cofactor is thiamine diphosphate.

It carries out the reaction D-glyceraldehyde 3-phosphate + pyruvate + H(+) = 1-deoxy-D-xylulose 5-phosphate + CO2. It functions in the pathway metabolic intermediate biosynthesis; 1-deoxy-D-xylulose 5-phosphate biosynthesis; 1-deoxy-D-xylulose 5-phosphate from D-glyceraldehyde 3-phosphate and pyruvate: step 1/1. Functionally, catalyzes the acyloin condensation reaction between C atoms 2 and 3 of pyruvate and glyceraldehyde 3-phosphate to yield 1-deoxy-D-xylulose-5-phosphate (DXP). The chain is 1-deoxy-D-xylulose-5-phosphate synthase from Hamiltonella defensa subsp. Acyrthosiphon pisum (strain 5AT).